The following is a 430-amino-acid chain: Trigger factor (430 aa).

One can recognise a PPIase FKBP-type domain in the interval glycine 157–proline 242.

Belongs to the FKBP-type PPIase family. Tig subfamily.

It localises to the cytoplasm. It catalyses the reaction [protein]-peptidylproline (omega=180) = [protein]-peptidylproline (omega=0). Functionally, involved in protein export. Acts as a chaperone by maintaining the newly synthesized protein in an open conformation. Functions as a peptidyl-prolyl cis-trans isomerase. In Xanthomonas axonopodis pv. citri (strain 306), this protein is Trigger factor.